We begin with the raw amino-acid sequence, 158 residues long: Large ribosomal subunit protein uL15 (158 aa).

Residues 1–13 are compositionally biased toward basic and acidic residues; that stretch reads MKLNEIKDNEGST. A disordered region spans residues 1–45; that stretch reads MKLNEIKDNEGSTHSRKRLGRGIGSGSGKTGGRGVKGQKSRSGVA. A compositionally biased stretch (gly residues) spans 21-35; sequence RGIGSGSGKTGGRGV.

The protein belongs to the universal ribosomal protein uL15 family. Part of the 50S ribosomal subunit.

In terms of biological role, binds to the 23S rRNA. The polypeptide is Large ribosomal subunit protein uL15 (Rhizobium etli (strain CIAT 652)).